The sequence spans 166 residues: Large ribosomal subunit protein uL10 (166 aa).

This sequence belongs to the universal ribosomal protein uL10 family. Part of the ribosomal stalk of the 50S ribosomal subunit. The N-terminus interacts with L11 and the large rRNA to form the base of the stalk. The C-terminus forms an elongated spine to which L12 dimers bind in a sequential fashion forming a multimeric L10(L12)X complex.

Its function is as follows. Forms part of the ribosomal stalk, playing a central role in the interaction of the ribosome with GTP-bound translation factors. The sequence is that of Large ribosomal subunit protein uL10 from Pseudomonas syringae pv. tomato (strain ATCC BAA-871 / DC3000).